The chain runs to 735 residues: MQYSIEVNNQVEIFDLNKVAKQAAGAVMLRVKNTVVLATVARDDVQVEEDFLPLTVQYIEKAYAAGRIPGGYVKRETKPGDFETLTARIIDRSLRPLFPKGYAYPTQIVVMVLSADPEVDLQVVGLNAASVALYLSDIPVNRPVCGVRVGYIDDKFVINPSNSELKSSALDLYVAGTKDELLMIEMRSIAQQSSQIIPIIAIDPMMDPSLNDSITQKQDMNEFSEDRIVEAIDFAGKAILRASNAYEEAFKEHKKEDAILELKPEIENENIAIYIDKFYKNDVKNAINQMAKSERASELGKIAKQIASDEVAQKEGWEEGVISNVLGKYKKKIVREQIINEGVRADGRALDEVRPISIETNVLPNAHGSCLFTRGQTQALVVATLGTDGDAQMYDILTEKTALIEKFMFNYNFPGFSVGEASPLKAPGRRELGHGNLAKRALAPSIDINSPYTIRLVSEILESNGSSSMASVCGGALALRAAGVDTQKLVAGVAMGLIFEGDKHAVLTDIMGLEDHDGDMDFKVAGSSDGITALQMDIKLGGISLEVLKEALYQAKRGREHILNLMHQADSKIEVNEDVLPKLELFSVDPSKIVDIIGQAGKTIKEIIERFEVSIDLDREKGEVKIAGGAKKNVDAAKDYIISITSKENSRGFGKKPHGHDRRDKDRQKPTFNIGDEFDGVVKSVVDFGAFIELKDGVDGLLHISKIKTPLNVGDRLKVCVSEQKGNKISLSLVE.

Mg(2+)-binding residues include Asp515 and Asp521. The 61-residue stretch at 581–641 (PKLELFSVDP…KNVDAAKDYI (61 aa)) folds into the KH domain. The interval 649 to 671 (NSRGFGKKPHGHDRRDKDRQKPT) is disordered. The 60-residue stretch at 675–734 (GDEFDGVVKSVVDFGAFIELKDGVDGLLHISKIKTPLNVGDRLKVCVSEQKGNKISLSLV) folds into the S1 motif domain.

Belongs to the polyribonucleotide nucleotidyltransferase family. Mg(2+) is required as a cofactor.

It is found in the cytoplasm. It catalyses the reaction RNA(n+1) + phosphate = RNA(n) + a ribonucleoside 5'-diphosphate. Involved in mRNA degradation. Catalyzes the phosphorolysis of single-stranded polyribonucleotides processively in the 3'- to 5'-direction. The sequence is that of Polyribonucleotide nucleotidyltransferase from Campylobacter curvus (strain 525.92).